A 139-amino-acid chain; its full sequence is ATP synthase epsilon chain (139 aa).

This sequence belongs to the ATPase epsilon chain family. In terms of assembly, F-type ATPases have 2 components, CF(1) - the catalytic core - and CF(0) - the membrane proton channel. CF(1) has five subunits: alpha(3), beta(3), gamma(1), delta(1), epsilon(1). CF(0) has three main subunits: a, b and c.

The protein localises to the cell inner membrane. In terms of biological role, produces ATP from ADP in the presence of a proton gradient across the membrane. This is ATP synthase epsilon chain from Pseudomonas entomophila (strain L48).